The sequence spans 405 residues: Pre-mRNA-splicing factor cwc-24 (405 aa).

Disordered stretches follow at residues 1–114 (MADT…NTIY) and 162–184 (TKKK…DGTY). Residues 15-29 (EPTTATPTAPIAPVA) are compositionally biased toward low complexity. Residues 31–46 (FKKRGAKGKANLRKRP) are compositionally biased toward basic residues. The segment covering 56–70 (SDDDSSDFESSEDEA) has biased composition (acidic residues). Basic residues predominate over residues 74-83 (RIKRRKKNHH). The C3H1-type zinc finger occupies 221 to 249 (DMAPDVCKDYKQTGFCGFGDNCKFLHARE). An RING-type zinc finger spans residues 310 to 349 (CIICRGPYSNSPVVTRCGHYFCEACALKRYRKDPSCAACG). Over residues 370 to 386 (KARAERLRREARERGEE) the composition is skewed to basic and acidic residues. The tract at residues 370–405 (KARAERLRREARERGEEVSEEEDEGEDEGEGAEGSD) is disordered. Positions 387 to 405 (VSEEEDEGEDEGEGAEGSD) are enriched in acidic residues.

It belongs to the CWC24 family. As to quaternary structure, associated with the spliceosome.

The protein localises to the nucleus. Involved in pre-mRNA splicing. In Neurospora crassa (strain ATCC 24698 / 74-OR23-1A / CBS 708.71 / DSM 1257 / FGSC 987), this protein is Pre-mRNA-splicing factor cwc-24 (cwc-24).